The following is a 1039-amino-acid chain: Alpha-mannosidase 2C1 (1039 aa).

Residues His-259, Asp-261, Asp-371, and His-576 each contribute to the Co(2+) site. Asp-371 functions as the Nucleophile in the catalytic mechanism.

This sequence belongs to the glycosyl hydrolase 38 family. Requires Co(2+) as cofactor. In terms of tissue distribution, expressed in kidney and liver (at protein level). Widely expressed, with highest levels in lung, ovary and testis. Also detected at lower levels in heart, brain, liver, spleen, kidney and thymus.

It is found in the cytoplasm. The catalysed reaction is Hydrolysis of terminal, non-reducing alpha-D-mannose residues in alpha-D-mannosides.. With respect to regulation, inhibited by 1,4-dideoxy-1,4-imino-d-mannitol (DIM) and EDTA. Cleaves alpha 1,2-, alpha 1,3-, and alpha 1,6-linked mannose residues from glycoproteins. Involved in the degradation of free oligosaccharides in the cytoplasm. The polypeptide is Alpha-mannosidase 2C1 (Mus musculus (Mouse)).